The following is a 196-amino-acid chain: Holliday junction branch migration complex subunit RuvA (196 aa).

The domain I stretch occupies residues 1–63; it reads MYDYIKGTLV…DDAHLLFGFH (63 aa). The segment at 64 to 142 is domain II; the sequence is TEDEKEVFLK…ELPAETTNTT (79 aa). Residues 143-146 form a flexible linker region; sequence ANQT. The tract at residues 147–196 is domain III; that stretch reads AGNQQLDEAMEALLALGYKATELKKVKAFFEDTNETAEQYIKSALKMLMK.

It belongs to the RuvA family. Homotetramer. Forms an RuvA(8)-RuvB(12)-Holliday junction (HJ) complex. HJ DNA is sandwiched between 2 RuvA tetramers; dsDNA enters through RuvA and exits via RuvB. An RuvB hexamer assembles on each DNA strand where it exits the tetramer. Each RuvB hexamer is contacted by two RuvA subunits (via domain III) on 2 adjacent RuvB subunits; this complex drives branch migration. In the full resolvosome a probable DNA-RuvA(4)-RuvB(12)-RuvC(2) complex forms which resolves the HJ.

The protein localises to the cytoplasm. The RuvA-RuvB-RuvC complex processes Holliday junction (HJ) DNA during genetic recombination and DNA repair, while the RuvA-RuvB complex plays an important role in the rescue of blocked DNA replication forks via replication fork reversal (RFR). RuvA specifically binds to HJ cruciform DNA, conferring on it an open structure. The RuvB hexamer acts as an ATP-dependent pump, pulling dsDNA into and through the RuvAB complex. HJ branch migration allows RuvC to scan DNA until it finds its consensus sequence, where it cleaves and resolves the cruciform DNA. The sequence is that of Holliday junction branch migration complex subunit RuvA from Streptococcus thermophilus (strain ATCC BAA-491 / LMD-9).